We begin with the raw amino-acid sequence, 424 residues long: Histidine--tRNA ligase (424 aa).

Belongs to the class-II aminoacyl-tRNA synthetase family. In terms of assembly, homodimer.

Its subcellular location is the cytoplasm. The catalysed reaction is tRNA(His) + L-histidine + ATP = L-histidyl-tRNA(His) + AMP + diphosphate + H(+). The polypeptide is Histidine--tRNA ligase (Edwardsiella ictaluri (strain 93-146)).